A 138-amino-acid chain; its full sequence is Large ribosomal subunit protein bL19 (138 aa).

Belongs to the bacterial ribosomal protein bL19 family.

In terms of biological role, this protein is located at the 30S-50S ribosomal subunit interface and may play a role in the structure and function of the aminoacyl-tRNA binding site. This Rickettsia conorii (strain ATCC VR-613 / Malish 7) protein is Large ribosomal subunit protein bL19.